The sequence spans 284 residues: Alpha-S1-casein (284 aa).

The N-terminal stretch at 1–15 (MKLLILTCLVAAALA) is a signal peptide. Disordered regions lie at residues 21-44 (RRNA…IVKQ) and 78-111 (SSAE…SATE). Low complexity-rich tracts occupy residues 24-36 (AVSS…NSSS) and 78-99 (SSAE…SSSS). A phosphoserine mark is found at Ser-79, Ser-93, Ser-94, Ser-95, Ser-96, Ser-97, Ser-98, and Ser-99. 10 repeat units span residues 138 to 143 (LLQQAS), 144 to 149 (LAQQAS), 150 to 155 (LAQQAS), 156 to 161 (LAQQAL), 162 to 167 (LAQQPS), 168 to 173 (LAQQAA), 174 to 179 (LAQQAS), 180 to 185 (LAQQAS), 186 to 191 (LAQQAS), and 192 to 197 (LAQKHH). The 10 X 6 AA tandem repeats stretch occupies residues 138 to 197 (LLQQASLAQQASLAQQASLAQQALLAQQPSLAQQAALAQQASLAQQASLAQQASLAQKHH).

Belongs to the alpha-casein family. As to expression, mammary gland specific. Secreted in milk.

The protein resides in the secreted. Its function is as follows. Important role in the capacity of milk to transport calcium phosphate. The protein is Alpha-S1-casein (Csn1s1) of Rattus norvegicus (Rat).